Consider the following 298-residue polypeptide: Thymidylate synthase (298 aa).

Residues arginine 25 and 159 to 160 each bind dUMP; that span reads RR. Cysteine 179 (nucleophile) is an active-site residue. Residues 200–203, asparagine 211, and 241–243 each bind dUMP; these read RSVD and HLY. Aspartate 203 contributes to the (6R)-5,10-methylene-5,6,7,8-tetrahydrofolate binding site. Residue alanine 297 coordinates (6R)-5,10-methylene-5,6,7,8-tetrahydrofolate.

The protein belongs to the thymidylate synthase family. Bacterial-type ThyA subfamily. Homodimer.

The protein resides in the cytoplasm. It carries out the reaction dUMP + (6R)-5,10-methylene-5,6,7,8-tetrahydrofolate = 7,8-dihydrofolate + dTMP. It participates in pyrimidine metabolism; dTTP biosynthesis. Functionally, catalyzes the reductive methylation of 2'-deoxyuridine-5'-monophosphate (dUMP) to 2'-deoxythymidine-5'-monophosphate (dTMP) while utilizing 5,10-methylenetetrahydrofolate (mTHF) as the methyl donor and reductant in the reaction, yielding dihydrofolate (DHF) as a by-product. This enzymatic reaction provides an intracellular de novo source of dTMP, an essential precursor for DNA biosynthesis. The sequence is that of Thymidylate synthase from Cereibacter sphaeroides (strain ATCC 17025 / ATH 2.4.3) (Rhodobacter sphaeroides).